The following is a 521-amino-acid chain: Cell cycle checkpoint protein hpr-9 (521 aa).

Disordered stretches follow at residues 1-20, 318-375, and 492-521; these read MQAIHENYTDNPSSSITRER, QHEE…NRFV, and GTETTSKMRMSQQFDKRLGPLVSDTQYESR. 2 stretches are compositionally biased toward polar residues: residues 355–370 and 493–504; these read ESLSQEETTRSQSLPS and TETTSKMRMSQQ.

This sequence belongs to the rad9 family. As to quaternary structure, putative component of the toroidal 9-1-1 (RAD9-RAD1-HUS1) complex, composed of hpr-9, mrt-2 and hus-1.

Its function is as follows. May be a component of the 9-1-1 cell-cycle checkpoint response complex that plays a major role in DNA repair. The chain is Cell cycle checkpoint protein hpr-9 from Caenorhabditis elegans.